The sequence spans 123 residues: Small ribosomal subunit protein uS12 (123 aa).

3-methylthioaspartic acid is present on D89.

This sequence belongs to the universal ribosomal protein uS12 family. In terms of assembly, part of the 30S ribosomal subunit. Contacts proteins S8 and S17. May interact with IF1 in the 30S initiation complex.

Its function is as follows. With S4 and S5 plays an important role in translational accuracy. Interacts with and stabilizes bases of the 16S rRNA that are involved in tRNA selection in the A site and with the mRNA backbone. Located at the interface of the 30S and 50S subunits, it traverses the body of the 30S subunit contacting proteins on the other side and probably holding the rRNA structure together. The combined cluster of proteins S8, S12 and S17 appears to hold together the shoulder and platform of the 30S subunit. The sequence is that of Small ribosomal subunit protein uS12 from Geotalea uraniireducens (strain Rf4) (Geobacter uraniireducens).